The primary structure comprises 398 residues: Nucleotide-sugar uncharacterized transporter 2 (398 aa).

10 helical membrane-spanning segments follow: residues 54 to 74, 84 to 104, 119 to 139, 150 to 170, 179 to 199, 201 to 221, 242 to 262, 271 to 291, 299 to 319, and 322 to 342; these read FCGP…IILA, FNFP…LLAF, TTPF…SGLA, FYQM…FVLF, VMAL…DLEF, LFGA…KILW, FTVF…VLLF, AILI…LALG, VVLG…IFGS, and GFIS…YTWL.

Belongs to the TPT transporter family. TPT (TC 2.A.7.9) subfamily.

It is found in the membrane. The chain is Nucleotide-sugar uncharacterized transporter 2 from Arabidopsis thaliana (Mouse-ear cress).